We begin with the raw amino-acid sequence, 82 residues long: ATP synthase subunit c (82 aa).

The next 2 helical transmembrane spans lie at 5–25 (MSLVAGLIAIGAGIAVGFGAI) and 55–75 (FLIIALAFMETLTIYGLVIAF).

The protein belongs to the ATPase C chain family. As to quaternary structure, F-type ATPases have 2 components, F(1) - the catalytic core - and F(0) - the membrane proton channel. F(1) has five subunits: alpha(3), beta(3), gamma(1), delta(1), epsilon(1). F(0) has three main subunits: a(1), b(2) and c(10-14). The alpha and beta chains form an alternating ring which encloses part of the gamma chain. F(1) is attached to F(0) by a central stalk formed by the gamma and epsilon chains, while a peripheral stalk is formed by the delta and b chains.

It localises to the cell membrane. Its function is as follows. F(1)F(0) ATP synthase produces ATP from ADP in the presence of a proton or sodium gradient. F-type ATPases consist of two structural domains, F(1) containing the extramembraneous catalytic core and F(0) containing the membrane proton channel, linked together by a central stalk and a peripheral stalk. During catalysis, ATP synthesis in the catalytic domain of F(1) is coupled via a rotary mechanism of the central stalk subunits to proton translocation. Functionally, key component of the F(0) channel; it plays a direct role in translocation across the membrane. A homomeric c-ring of between 10-14 subunits forms the central stalk rotor element with the F(1) delta and epsilon subunits. The sequence is that of ATP synthase subunit c from Carboxydothermus hydrogenoformans (strain ATCC BAA-161 / DSM 6008 / Z-2901).